The chain runs to 195 residues: Imidazole glycerol phosphate synthase subunit HisH (195 aa).

Positions 1–195 (MIAVVDLGIG…LRLLENFRRL (195 aa)) constitute a Glutamine amidotransferase type-1 domain. C72 serves as the catalytic Nucleophile. Catalysis depends on residues H177 and E179.

As to quaternary structure, heterodimer of HisH and HisF.

Its subcellular location is the cytoplasm. It catalyses the reaction 5-[(5-phospho-1-deoxy-D-ribulos-1-ylimino)methylamino]-1-(5-phospho-beta-D-ribosyl)imidazole-4-carboxamide + L-glutamine = D-erythro-1-(imidazol-4-yl)glycerol 3-phosphate + 5-amino-1-(5-phospho-beta-D-ribosyl)imidazole-4-carboxamide + L-glutamate + H(+). The enzyme catalyses L-glutamine + H2O = L-glutamate + NH4(+). The protein operates within amino-acid biosynthesis; L-histidine biosynthesis; L-histidine from 5-phospho-alpha-D-ribose 1-diphosphate: step 5/9. Functionally, IGPS catalyzes the conversion of PRFAR and glutamine to IGP, AICAR and glutamate. The HisH subunit catalyzes the hydrolysis of glutamine to glutamate and ammonia as part of the synthesis of IGP and AICAR. The resulting ammonia molecule is channeled to the active site of HisF. This chain is Imidazole glycerol phosphate synthase subunit HisH, found in Thermococcus kodakarensis (strain ATCC BAA-918 / JCM 12380 / KOD1) (Pyrococcus kodakaraensis (strain KOD1)).